The sequence spans 265 residues: Probable protein VP2 (265 aa).

Disordered regions lie at residues 44-110, 152-171, and 194-265; these read RLGR…DDLS, STRSTSTRASRSTDGTSDVA, and VQNA…CSSN. The segment covering 48–60 has biased composition (pro residues); the sequence is PQPPRPPGGPPGP. Low complexity predominate over residues 152–168; the sequence is STRSTSTRASRSTDGTS. The span at 221–242 shows a compositional bias: basic residues; that stretch reads GKTRPRKKPRAKQKPKKRRRYR. Positions 243 to 265 are enriched in low complexity; sequence SSSNSSSKSNDSSDAESSTCSSN.

Post-translationally, phosphorylated at C-terminal serines.

This is Probable protein VP2 from Torque teno virus (isolate Human/Germany/KAV/2001) (TTV).